Consider the following 200-residue polypeptide: Recombination protein RecR (200 aa).

The C4-type zinc finger occupies 58-75 (CPCCFCLKNFPESQCEFC). One can recognise a Toprim domain in the interval 82–177 (STLCIVASPK…SISRLALGLP (96 aa)).

It belongs to the RecR family.

Its function is as follows. May play a role in DNA repair. It seems to be involved in an RecBC-independent recombinational process of DNA repair. It may act with RecF and RecO. The protein is Recombination protein RecR of Chlamydia felis (strain Fe/C-56) (Chlamydophila felis).